The primary structure comprises 275 residues: Large ribosomal subunit protein uL2 (275 aa).

The interval 214-275 is disordered; the sequence is RWRGNRPTVR…NKFILSHRNK (62 aa). The segment covering 255–275 has biased composition (basic residues); that stretch reads KGKKTRSNKRTNKFILSHRNK.

This sequence belongs to the universal ribosomal protein uL2 family. As to quaternary structure, part of the 50S ribosomal subunit. Forms a bridge to the 30S subunit in the 70S ribosome.

In terms of biological role, one of the primary rRNA binding proteins. Required for association of the 30S and 50S subunits to form the 70S ribosome, for tRNA binding and peptide bond formation. It has been suggested to have peptidyltransferase activity; this is somewhat controversial. Makes several contacts with the 16S rRNA in the 70S ribosome. The polypeptide is Large ribosomal subunit protein uL2 (Blochmanniella pennsylvanica (strain BPEN)).